The primary structure comprises 148 residues: D-aminoacyl-tRNA deacylase (148 aa).

Positions 137 to 138 match the Gly-cisPro motif, important for rejection of L-amino acids motif; it reads GP.

This sequence belongs to the DTD family. Homodimer.

It is found in the cytoplasm. The enzyme catalyses glycyl-tRNA(Ala) + H2O = tRNA(Ala) + glycine + H(+). It catalyses the reaction a D-aminoacyl-tRNA + H2O = a tRNA + a D-alpha-amino acid + H(+). Functionally, an aminoacyl-tRNA editing enzyme that deacylates mischarged D-aminoacyl-tRNAs. Also deacylates mischarged glycyl-tRNA(Ala), protecting cells against glycine mischarging by AlaRS. Acts via tRNA-based rather than protein-based catalysis; rejects L-amino acids rather than detecting D-amino acids in the active site. By recycling D-aminoacyl-tRNA to D-amino acids and free tRNA molecules, this enzyme counteracts the toxicity associated with the formation of D-aminoacyl-tRNA entities in vivo and helps enforce protein L-homochirality. The sequence is that of D-aminoacyl-tRNA deacylase from Finegoldia magna (strain ATCC 29328 / DSM 20472 / WAL 2508) (Peptostreptococcus magnus).